We begin with the raw amino-acid sequence, 450 residues long: MREILHVQGGQCGNQIGSKFWEVICDEHGVDPTGKYNGDGSSDIQLERIDVYYNEASGGRYVPRAVLMDLEPGTMDSIRSGPIGQIFRPDNFVFGQSGAGNNWAKGHYTEGAELIDAVLDVVRKEAENCDCLQGFQVCHSLGGGTGSGMGTLLISKIREEYPDRMMMTFSVFPSPKVSDTVVEPYNATLSVHQLVENADECMVLDNEALYDICFRTLKLTTPSFGDLNHLISATMSGVTCCLRFPGQLNSDLRKLAVNLIPFPRLHFFMVGFAPLTSRGSQQYVSLTVPELTQQMWDAKNMMCAADPRHGRYLTASAMFRGKMSTKEVDEQMMNVQNKNSSYFVEWIPNNVKSSVCDIPPRGLKTSSTFIGNSTSIQEMFRRVSEQFTAMFRRKAFLHWYTGEGMDEMEFTEAESNMNDLVAEYQQYQDATVEDEEEYEGEEGLDENYET.

The GTP site is built by glutamine 11, glutamate 71, serine 140, glycine 144, threonine 145, glycine 146, asparagine 206, and asparagine 228. Residue glutamate 71 coordinates Mg(2+). The interval 429 to 450 (DATVEDEEEYEGEEGLDENYET) is disordered. A compositionally biased stretch (acidic residues) spans 431-450 (TVEDEEEYEGEEGLDENYET).

The protein belongs to the tubulin family. Dimer of alpha and beta chains. A typical microtubule is a hollow water-filled tube with an outer diameter of 25 nm and an inner diameter of 15 nM. Alpha-beta heterodimers associate head-to-tail to form protofilaments running lengthwise along the microtubule wall with the beta-tubulin subunit facing the microtubule plus end conferring a structural polarity. Microtubules usually have 13 protofilaments but different protofilament numbers can be found in some organisms and specialized cells. Requires Mg(2+) as cofactor.

The protein resides in the cytoplasm. The protein localises to the cytoskeleton. Functionally, tubulin is the major constituent of microtubules, a cylinder consisting of laterally associated linear protofilaments composed of alpha- and beta-tubulin heterodimers. Microtubules grow by the addition of GTP-tubulin dimers to the microtubule end, where a stabilizing cap forms. Below the cap, tubulin dimers are in GDP-bound state, owing to GTPase activity of alpha-tubulin. The chain is Tubulin beta-6 chain from Gossypium hirsutum (Upland cotton).